The chain runs to 291 residues: Protease HtpX (291 aa).

Helical transmembrane passes span isoleucine 4–leucine 24 and glycine 36–isoleucine 56. Residue histidine 142 coordinates Zn(2+). The active site involves glutamate 143. Histidine 146 is a Zn(2+) binding site. Transmembrane regions (helical) follow at residues glycine 150–alanine 170 and phenylalanine 193–tryptophan 213. Glutamate 219 contributes to the Zn(2+) binding site.

This sequence belongs to the peptidase M48B family. Requires Zn(2+) as cofactor.

The protein resides in the cell inner membrane. In Pseudomonas aeruginosa (strain LESB58), this protein is Protease HtpX.